A 465-amino-acid chain; its full sequence is Cysteine--tRNA ligase (465 aa).

Cysteine 29 contacts Zn(2+). The short motif at 31 to 41 (PTVYNYIHIGN) is the 'HIGH' region element. Zn(2+) contacts are provided by cysteine 209, histidine 234, and glutamate 238. Residues 266 to 270 (KMSKS) carry the 'KMSKS' region motif. Lysine 269 serves as a coordination point for ATP. Serine 270 carries the post-translational modification Phosphoserine.

The protein belongs to the class-I aminoacyl-tRNA synthetase family. In terms of assembly, monomer. Zn(2+) serves as cofactor.

It is found in the cytoplasm. The enzyme catalyses tRNA(Cys) + L-cysteine + ATP = L-cysteinyl-tRNA(Cys) + AMP + diphosphate. This Bacillus cereus (strain G9842) protein is Cysteine--tRNA ligase.